We begin with the raw amino-acid sequence, 100 residues long: Small ribosomal subunit protein uS14 (100 aa).

Belongs to the universal ribosomal protein uS14 family. As to quaternary structure, part of the 30S ribosomal subunit. Contacts proteins S3 and S10.

Its function is as follows. Binds 16S rRNA, required for the assembly of 30S particles and may also be responsible for determining the conformation of the 16S rRNA at the A site. The chain is Small ribosomal subunit protein uS14 from Prochlorococcus marinus (strain MIT 9301).